The primary structure comprises 231 residues: Large ribosomal subunit protein uL1 (231 aa).

The protein belongs to the universal ribosomal protein uL1 family. Part of the 50S ribosomal subunit.

Its function is as follows. Binds directly to 23S rRNA. The L1 stalk is quite mobile in the ribosome, and is involved in E site tRNA release. Functionally, protein L1 is also a translational repressor protein, it controls the translation of the L11 operon by binding to its mRNA. This is Large ribosomal subunit protein uL1 from Verminephrobacter eiseniae (strain EF01-2).